Consider the following 330-residue polypeptide: Formylaminopyrimidine-binding protein (330 aa).

Positions 1 to 18 (MKSFKIISLLLAILFLAS) are cleaved as a signal peptide. Cys-19 carries the N-palmitoyl cysteine lipid modification. Cys-19 carries S-diacylglycerol cysteine lipidation. Residues 38–39 (DW), Tyr-90, Asn-145, Tyr-188, and Glu-192 each bind substrate.

It belongs to the NMT1 family. The complex is likely composed of an ATP-binding protein (ThiZ), a transmembrane protein (ThiX) and a solute-binding protein (ThiY).

The protein resides in the cell membrane. The protein operates within cofactor biosynthesis; thiamine diphosphate biosynthesis. Participates in a thiamine pyrimidine salvage pathway as part of the ABC transporter complex ThiXYZ involved in the import of thiamine degradation products. Binds the formylaminopyrimidine N-formyl-4-amino-5-aminomethyl-2-methylpyrimidine (FAMP). Does not bind thiamine. This Halalkalibacterium halodurans (strain ATCC BAA-125 / DSM 18197 / FERM 7344 / JCM 9153 / C-125) (Bacillus halodurans) protein is Formylaminopyrimidine-binding protein.